The chain runs to 3084 residues: Protein prune homolog 2 (3084 aa).

An N-acetylmethionine modification is found at Met1. Residues 109 to 111 (GSH) carry the DHH motif motif. Disordered stretches follow at residues 394-417 (QPSS…QADG), 430-465 (TIRS…PGFD), 500-536 (ASEQ…PKGL), 672-733 (EQES…QKEE), 811-837 (KNTW…MGQS), 861-907 (EIWG…KATG), 947-1080 (SASN…DDPS), 1224-1316 (NMPS…GQSE), 1338-1395 (SGVN…LEVE), 1502-1543 (MNST…DLHD), 1600-1652 (GFGK…TTKR), 1776-1799 (ETGT…DPDK), 1836-1886 (GELE…GDKS), 1961-1980 (DENG…QENQ), 2071-2196 (ILTH…NPEV), 2410-2782 (MLLS…SHPR), 2797-2816 (QSEG…EIDI), and 2825-2859 (DEAD…AEEE). Positions 501–511 (SEQSQPSSHSA) are enriched in polar residues. 2 stretches are compositionally biased toward basic and acidic residues: residues 682-696 (PWKD…RRTS) and 723-733 (GNKEAQDQKEE). Polar residues-rich tracts occupy residues 811–828 (KNTW…SGQE) and 865–891 (KNNS…NNSK). Residues 962 to 975 (TNYSTSDSYTSPTY) show a composition bias toward low complexity. The span at 977–999 (GDEKEIANKPVDKDNGFEAKDAE) shows a compositional bias: basic and acidic residues. Polar residues predominate over residues 1009 to 1019 (ATSSQQSQRNR). Basic and acidic residues predominate over residues 1034-1063 (HTEDKPEGNDAHHPDSDALKTEHAEDKNAS). Over residues 1071-1080 (SSPSSYDDPS) the composition is skewed to low complexity. Over residues 1248–1261 (SPRHSNGKDSHMLE) the composition is skewed to basic and acidic residues. Residues 1265–1294 (LSESGGLTSQPVNQDTWGDSQGDTASSVTG) show a composition bias toward polar residues. Positions 1350–1366 (KPRDQEFSSSDAFEHQD) are enriched in basic and acidic residues. Residues 1368 to 1378 (SSASGKISSLS) show a composition bias toward low complexity. 3 stretches are compositionally biased toward polar residues: residues 1779-1792 (TMDT…STEA), 1854-1869 (PIQN…STNP), and 1965-1980 (CVST…QENQ). Basic and acidic residues predominate over residues 2089 to 2103 (VCHDSEGEQKMEKHT). Residues 2162 to 2174 (SSKPASSRSSPEP) show a composition bias toward low complexity. Composition is skewed to basic and acidic residues over residues 2416–2428 (PDHR…ETNI), 2506–2525 (KQTE…EDHQ), and 2535–2553 (SHEK…RENI). Residues 2569-2584 (PETQLSGTPDTCQSEF) show a composition bias toward polar residues. Over residues 2595-2606 (RMSSSSNHESAS) the composition is skewed to low complexity. The segment covering 2607–2617 (LENPAQDQSWM) has biased composition (polar residues). Over residues 2653-2664 (KGPKSQVLERNK) the composition is skewed to basic and acidic residues. Acidic residues predominate over residues 2806–2816 (DNLDSPDEIDI). Residues 2840–2849 (ANKSSGQESE) show a composition bias toward polar residues. The region spanning 2879–3040 (DMKVIEPYRR…SIIKYDEEKS (162 aa)) is the CRAL-TRIO domain.

This sequence belongs to the PPase class C family. Prune subfamily.

It is found in the cytoplasm. In terms of biological role, may play an important role in regulating differentiation, survival and aggressiveness of the tumor cells. The protein is Protein prune homolog 2 (Prune2) of Mus musculus (Mouse).